A 241-amino-acid polypeptide reads, in one-letter code: Caffeoyl-CoA O-methyltransferase (241 aa).

Lysine 14 is a substrate binding site. Residues threonine 58, glutamate 80, 82 to 83, serine 88, aspartate 106, and alanine 135 each bind S-adenosyl-L-methionine; that span reads GV. Aspartate 158 is a substrate binding site. Residue aspartate 158 coordinates a divalent metal cation. Residue aspartate 160 participates in S-adenosyl-L-methionine binding. Residues aspartate 184 and asparagine 185 each coordinate a divalent metal cation.

Belongs to the class I-like SAM-binding methyltransferase superfamily. Cation-dependent O-methyltransferase family. CCoAMT subfamily. Requires a divalent metal cation as cofactor.

It carries out the reaction (E)-caffeoyl-CoA + S-adenosyl-L-methionine = (E)-feruloyl-CoA + S-adenosyl-L-homocysteine + H(+). The protein operates within aromatic compound metabolism; phenylpropanoid biosynthesis. In terms of biological role, methylates caffeoyl-CoA to feruloyl-CoA and 5-hydroxyferuloyl-CoA to sinapoyl-CoA. Plays a role in the synthesis of feruloylated polysaccharides. Involved in the reinforcement of the plant cell wall. Also involved in the responding to wounding or pathogen challenge by the increased formation of cell wall-bound ferulic acid polymers. In Stellaria longipes (Longstalk starwort), this protein is Caffeoyl-CoA O-methyltransferase.